The primary structure comprises 300 residues: Lipoyl synthase 2 (300 aa).

C46, C51, C57, C72, C76, C79, and S294 together coordinate [4Fe-4S] cluster. In terms of domain architecture, Radical SAM core spans 58 to 283 (YAQKTATFLL…GKLAREMGFS (226 aa)).

Belongs to the radical SAM superfamily. Lipoyl synthase family. [4Fe-4S] cluster is required as a cofactor.

It is found in the cytoplasm. It carries out the reaction [[Fe-S] cluster scaffold protein carrying a second [4Fe-4S](2+) cluster] + N(6)-octanoyl-L-lysyl-[protein] + 2 oxidized [2Fe-2S]-[ferredoxin] + 2 S-adenosyl-L-methionine + 4 H(+) = [[Fe-S] cluster scaffold protein] + N(6)-[(R)-dihydrolipoyl]-L-lysyl-[protein] + 4 Fe(3+) + 2 hydrogen sulfide + 2 5'-deoxyadenosine + 2 L-methionine + 2 reduced [2Fe-2S]-[ferredoxin]. The protein operates within protein modification; protein lipoylation via endogenous pathway; protein N(6)-(lipoyl)lysine from octanoyl-[acyl-carrier-protein]: step 2/2. Functionally, catalyzes the radical-mediated insertion of two sulfur atoms into the C-6 and C-8 positions of the octanoyl moiety bound to the lipoyl domains of lipoate-dependent enzymes, thereby converting the octanoylated domains into lipoylated derivatives. This is Lipoyl synthase 2 from Nostoc sp. (strain PCC 7120 / SAG 25.82 / UTEX 2576).